An 88-amino-acid chain; its full sequence is Small ribosomal subunit protein uS15 (88 aa).

The protein belongs to the universal ribosomal protein uS15 family. In terms of assembly, part of the 30S ribosomal subunit. Forms a bridge to the 50S subunit in the 70S ribosome, contacting the 23S rRNA.

Functionally, one of the primary rRNA binding proteins, it binds directly to 16S rRNA where it helps nucleate assembly of the platform of the 30S subunit by binding and bridging several RNA helices of the 16S rRNA. In terms of biological role, forms an intersubunit bridge (bridge B4) with the 23S rRNA of the 50S subunit in the ribosome. This chain is Small ribosomal subunit protein uS15, found in Leptospira biflexa serovar Patoc (strain Patoc 1 / Ames).